We begin with the raw amino-acid sequence, 563 residues long: Light-independent protochlorophyllide reductase subunit B (563 aa).

D36 serves as a coordination point for [4Fe-4S] cluster. D349 (proton donor) is an active-site residue. G484–M485 provides a ligand contact to substrate.

It belongs to the ChlB/BchB/BchZ family. In terms of assembly, protochlorophyllide reductase is composed of three subunits; ChlL, ChlN and ChlB. Forms a heterotetramer of two ChlB and two ChlN subunits. The cofactor is [4Fe-4S] cluster.

It is found in the plastid. The protein resides in the chloroplast. The enzyme catalyses chlorophyllide a + oxidized 2[4Fe-4S]-[ferredoxin] + 2 ADP + 2 phosphate = protochlorophyllide a + reduced 2[4Fe-4S]-[ferredoxin] + 2 ATP + 2 H2O. It participates in porphyrin-containing compound metabolism; chlorophyll biosynthesis (light-independent). Its function is as follows. Component of the dark-operative protochlorophyllide reductase (DPOR) that uses Mg-ATP and reduced ferredoxin to reduce ring D of protochlorophyllide (Pchlide) to form chlorophyllide a (Chlide). This reaction is light-independent. The NB-protein (ChlN-ChlB) is the catalytic component of the complex. The sequence is that of Light-independent protochlorophyllide reductase subunit B from Chlamydomonas moewusii (Chlamydomonas eugametos).